A 394-amino-acid polypeptide reads, in one-letter code: Immune-associated nucleotide-binding protein 12 (394 aa).

Residues 45–251 (KPARTLLLVG…YMADLSHEIR (207 aa)) enclose the AIG1-type G domain. Residues 54–61 (GRSGNGKS) form a G1 region. Residues 54–62 (GRSGNGKSA) and Ser-75 contribute to the GTP site. Positions 81–85 (GVTTA) are G2. The interval 103–106 (DTPG) is G3. A G4 region spans residues 173-176 (TNED). A G5 region spans residues 210–212 (RNR). Asn-211 contacts GTP. A coiled-coil region spans residues 289–387 (NQQLRQMMER…KQMATDLQKS (99 aa)).

It belongs to the TRAFAC class TrmE-Era-EngA-EngB-Septin-like GTPase superfamily. AIG1/Toc34/Toc159-like paraseptin GTPase family. IAN subfamily.

This chain is Immune-associated nucleotide-binding protein 12, found in Arabidopsis thaliana (Mouse-ear cress).